We begin with the raw amino-acid sequence, 227 residues long: Cytochrome c oxidase subunit 2 (227 aa).

The Mitochondrial intermembrane segment spans residues 1–14 (MAYPFQLGLQDATS). Residues 15 to 45 (PIMEELLHFHDHTLMIVFLISSLVLYIISLM) traverse the membrane as a helical segment. Residues 46–59 (LTTKLTHTSTMDAQ) are Mitochondrial matrix-facing. A helical membrane pass occupies residues 60-87 (EVETVWTILPAIILILIALLSLRILYMM). The Mitochondrial intermembrane segment spans residues 88–227 (DEINNPFLTM…YFETWSALMV (140 aa)). Histidine 161, cysteine 196, glutamate 198, cysteine 200, histidine 204, and methionine 207 together coordinate Cu cation. Glutamate 198 contacts Mg(2+). Residue tyrosine 218 is modified to Phosphotyrosine.

Belongs to the cytochrome c oxidase subunit 2 family. As to quaternary structure, component of the cytochrome c oxidase (complex IV, CIV), a multisubunit enzyme composed of 14 subunits. The complex is composed of a catalytic core of 3 subunits MT-CO1, MT-CO2 and MT-CO3, encoded in the mitochondrial DNA, and 11 supernumerary subunits COX4I, COX5A, COX5B, COX6A, COX6B, COX6C, COX7A, COX7B, COX7C, COX8 and NDUFA4, which are encoded in the nuclear genome. The complex exists as a monomer or a dimer and forms supercomplexes (SCs) in the inner mitochondrial membrane with NADH-ubiquinone oxidoreductase (complex I, CI) and ubiquinol-cytochrome c oxidoreductase (cytochrome b-c1 complex, complex III, CIII), resulting in different assemblies (supercomplex SCI(1)III(2)IV(1) and megacomplex MCI(2)III(2)IV(2)). Found in a complex with TMEM177, COA6, COX18, COX20, SCO1 and SCO2. Interacts with TMEM177 in a COX20-dependent manner. Interacts with COX20. Interacts with COX16. Requires Cu cation as cofactor.

It is found in the mitochondrion inner membrane. The catalysed reaction is 4 Fe(II)-[cytochrome c] + O2 + 8 H(+)(in) = 4 Fe(III)-[cytochrome c] + 2 H2O + 4 H(+)(out). Its function is as follows. Component of the cytochrome c oxidase, the last enzyme in the mitochondrial electron transport chain which drives oxidative phosphorylation. The respiratory chain contains 3 multisubunit complexes succinate dehydrogenase (complex II, CII), ubiquinol-cytochrome c oxidoreductase (cytochrome b-c1 complex, complex III, CIII) and cytochrome c oxidase (complex IV, CIV), that cooperate to transfer electrons derived from NADH and succinate to molecular oxygen, creating an electrochemical gradient over the inner membrane that drives transmembrane transport and the ATP synthase. Cytochrome c oxidase is the component of the respiratory chain that catalyzes the reduction of oxygen to water. Electrons originating from reduced cytochrome c in the intermembrane space (IMS) are transferred via the dinuclear copper A center (CU(A)) of subunit 2 and heme A of subunit 1 to the active site in subunit 1, a binuclear center (BNC) formed by heme A3 and copper B (CU(B)). The BNC reduces molecular oxygen to 2 water molecules using 4 electrons from cytochrome c in the IMS and 4 protons from the mitochondrial matrix. The protein is Cytochrome c oxidase subunit 2 (MT-CO2) of Nyctereutes procyonoides (Raccoon dog).